Here is a 379-residue protein sequence, read N- to C-terminus: LIM/homeobox protein Lhx9 (379 aa).

LIM zinc-binding domains lie at 51–112 (TLCA…RFSV) and 113–175 (QRCA…LVQG). Disordered stretches follow at residues 232–257 (ENDTDLDRDQSYPPSQKTKRMRTSFK) and 310–379 (RQEN…TNLF). Positions 248–257 (KTKRMRTSFK) are enriched in basic residues. A DNA-binding region (homeobox) is located at residues 249 to 308 (TKRMRTSFKHHQLRTTKSYFAINHNPDAKDLKQLAQKTGLTKRVLQVWFQNARAKFRRNL). Residues 326-379 (APASTDSAALTPTGAASTLSDLTSPSLNVGASVTPNMDSHESGSPSQTTLTNLF) are compositionally biased toward polar residues.

In terms of tissue distribution, isoform 1 and isoform 3 are expressed in ovary, testis, brain and heart. Isoform 4 and isoform 5 are expressed in brain.

Its subcellular location is the nucleus. May be involved in gonadal development. The chain is LIM/homeobox protein Lhx9 (lhx9) from Glandirana rugosa (Japanese wrinkled frog).